The following is a 377-amino-acid chain: MGPAARPALRSPPPPPPPPPSPLLLLLPLLPLWLGLAGPGAAADGSEPAAGAGRGGARAVRVDVRLPRQDALVLEGVRIGSEADPAPLLGGRLLLMDIVDAEQEAPVEGWIAVAYVGKEQAAQFHQENKGSGPQAYPKALVQQMRRALFLGASALLLLILNHNVVRELDISQLLLRPVIVLHYSSNVTKLLDALLQRTQATAEITSGESLSANIEWKLTLWTTCGLSKDGYGGWQDLVCLGGSRAQEQKPLQQLWNAILLVAMLLCTGLVVQAQRQASRQSQRELGGQVDLFKRRVVRRLASLKTRRCRLSRAAQGLPDPGAETCAVCLDYFCNKQWLRVLPCKHEFHRDCVDPWLMLQQTCPLCKFNVLGNRYSDD.

Over 1–22 (MGPAARPALRSPPPPPPPPPSP) the chain is Cytoplasmic. Residues 1–22 (MGPAARPALRSPPPPPPPPPSP) form a disordered region. Positions 10 to 22 (RSPPPPPPPPPSP) are enriched in pro residues. Residues 23-43 (LLLLLPLLPLWLGLAGPGAAA) traverse the membrane as a helical segment. Over 44-250 (DGSEPAAGAG…GGSRAQEQKP (207 aa)) the chain is Extracellular. An N-linked (GlcNAc...) asparagine glycan is attached at Asn-186. A helical membrane pass occupies residues 251-271 (LQQLWNAILLVAMLLCTGLVV). Over 272-377 (QAQRQASRQS…NVLGNRYSDD (106 aa)) the chain is Cytoplasmic. The RING-type; atypical zinc-finger motif lies at 325–366 (CAVCLDYFCNKQWLRVLPCKHEFHRDCVDPWLMLQQTCPLCK).

The protein localises to the membrane. This is RING finger protein 215 (RNF215) from Homo sapiens (Human).